Here is a 1018-residue protein sequence, read N- to C-terminus: Contactin-1 (1018 aa).

A signal peptide spans 1-20 (MKMWLLFSLLVIISFKTCLS). Ig-like C2-type domains follow at residues 41-131 (PIFE…ATLS), 137-223 (PFPP…KSVF), 241-326 (PADI…ARIY), 331-407 (PEWV…AELK), 413-500 (PTFE…GTLV), and 504-601 (PTRI…LVVR). Intrachain disulfides connect C65/C114 and C158/C211. Residues N208 and N258 are each glycosylated (N-linked (GlcNAc...) asparagine). An intrachain disulfide couples C263 to C310. N338 carries an N-linked (GlcNAc...) asparagine glycan. Intrachain disulfides connect C352/C391 and C436/C484. N-linked (GlcNAc...) asparagine glycosylation is found at N457, N473, N494, and N521. Cysteines 526 and 583 form a disulfide. An N-linked (GlcNAc...) asparagine glycan is attached at N591. Fibronectin type-III domains lie at 606 to 704 (PPGG…TDGA), 709 to 806 (APSD…SAQD), 811 to 906 (APTA…APPS), and 907 to 1000 (QPPR…ILSP). Disordered regions lie at residues 698–718 (KIKTDGAAPNVAPSDVGGGGG) and 891–910 (PPSDMTETFTKKAPPSQPPR). The GPI-anchor amidated serine moiety is linked to residue S999. Positions 1000 to 1018 (PCLLGFLLPALGILVYLEF) are cleaved as a propeptide — removed in mature form.

This sequence belongs to the immunoglobulin superfamily. Contactin family. In terms of assembly, monomer. Interacts with CNTNAP1 in cis form. Binds to the carbonic-anhydrase like domain of PTPRZ1. Interacts with NOTCH1 and TNR. Detected in a complex with NRCAM and PTPRB. Interacts with TASOR.

Its subcellular location is the cell membrane. Contactins mediate cell surface interactions during nervous system development. Involved in the formation of paranodal axo-glial junctions in myelinated peripheral nerves and in the signaling between axons and myelinating glial cells via its association with CNTNAP1. Participates in oligodendrocytes generation by acting as a ligand of NOTCH1. Its association with NOTCH1 promotes NOTCH1 activation through the released notch intracellular domain (NICD) and subsequent translocation to the nucleus. Interaction with TNR induces a repulsion of neurons and an inhibition of neurite outgrowth. The protein is Contactin-1 (CNTN1) of Bos taurus (Bovine).